Reading from the N-terminus, the 155-residue chain is Large ribosomal subunit protein uL11 (155 aa).

This sequence belongs to the universal ribosomal protein uL11 family. In terms of assembly, part of the ribosomal stalk of the 50S ribosomal subunit. Interacts with L10 and the large rRNA to form the base of the stalk. L10 forms an elongated spine to which L12 dimers bind in a sequential fashion forming a multimeric L10(L12)X complex. In terms of processing, one or more lysine residues are methylated.

Forms part of the ribosomal stalk which helps the ribosome interact with GTP-bound translation factors. The protein is Large ribosomal subunit protein uL11 of Malacoplasma penetrans (strain HF-2) (Mycoplasma penetrans).